Here is a 1701-residue protein sequence, read N- to C-terminus: Rho guanine nucleotide exchange factor TIAM2 (1701 aa).

Disordered stretches follow at residues 1-21 (MGNS…NTIT), 201-250 (SPTL…SSWY), 265-293 (GSFL…FNQS), and 389-417 (SLSR…DGLN). Gly-2 is lipidated: N-myristoyl glycine. Over residues 238-248 (SKGSSLSSESS) the composition is skewed to low complexity. Residues 397-413 (LQEPRSKEGSDYFDSRS) show a composition bias toward basic and acidic residues. The 115-residue stretch at 506-620 (VVRKAGWLFF…WVTAVHSACA (115 aa)) folds into the PH 1 domain. A coiled-coil region spans residues 628 to 695 (GKEDTLRLLK…KFHMDLFRMR (68 aa)). Positions 810-881 (IQTYVHFQDN…YMQQQVYDEI (72 aa)) constitute an RBD domain. The region spanning 890–976 (DVQLTKTGSV…GLTLIARPPD (87 aa)) is the PDZ domain. Positions 1070–1092 (DSQANGMEGPRENQDPPPRSLAR) are disordered. Residues 1099–1293 (RLRKVIQELV…EKVASHINEM (195 aa)) enclose the DH domain. Residues 1347-1478 (DLELTVFVFK…EKTCKDRLVP (132 aa)) form the PH 2 domain. 2 disordered regions span residues 1500–1556 (NSSS…GLAD) and 1568–1628 (LSDE…PKLV). The span at 1513–1527 (GTLLDSDEGSLSSGT) shows a compositional bias: low complexity. Ser-1583 is subject to Phosphoserine. Basic and acidic residues predominate over residues 1596–1607 (RISEDPDVHPEA). Phosphothreonine is present on Thr-1648.

This sequence belongs to the TIAM family. Interacts with MAP1A, MAP1B, PARP1 and YWHAE. Interacts with CD44, PARD3 and MAPK8IP2. Post-translationally, phosphorylated on serine and threonine residues. Phosphorylated on Thr-1648 by Rho-kinase. Its phosphorylation by Rho-kinase inhibits its guanine nucleotide exchange activity, its interaction with MAP1A, MAP1B, PARP1 and YWHAE and reduces its ability to promote neurite growth. Expressed in the occipital, frontal and temporal lobes, cerebellum, putamen and testis.

It localises to the cytoplasm. The protein resides in the cell projection. It is found in the lamellipodium. The protein localises to the filopodium. Its subcellular location is the growth cone. It localises to the neuron projection. The protein resides in the perikaryon. Modulates the activity of RHO-like proteins and connects extracellular signals to cytoskeletal activities. Acts as a GDP-dissociation stimulator protein that stimulates the GDP-GTP exchange activity of RHO-like GTPases and activates them. Mediates extracellular laminin signals to activate Rac1, contributing to neurite growth. Involved in lamellipodial formation and advancement of the growth cone of embryonic hippocampal neurons. Promotes migration of neurons in the cerebral cortex. When overexpressed, induces membrane ruffling accompanied by the accumulation of actin filaments along the altered plasma membrane. Activates specifically RAC1, but not CDC42 and RHOA. This chain is Rho guanine nucleotide exchange factor TIAM2 (TIAM2), found in Homo sapiens (Human).